Reading from the N-terminus, the 529-residue chain is Zinc metalloproteinase MspA (529 aa).

The signal sequence occupies residues 1–24; that stretch reads MHHNYYLSPLAVALALGMVSPAKA. Residues 25-204 constitute a propeptide that is removed on maturation; the sequence is ADPILLQNAS…PFVQWNDIKT (180 aa). His365 is a Zn(2+) binding site. Glu366 is a catalytic residue. Residues His369 and Glu389 each contribute to the Zn(2+) site. His451 (proton donor) is an active-site residue.

It belongs to the peptidase M4 family. Zn(2+) is required as a cofactor.

The protein is Zinc metalloproteinase MspA (mspA) of Legionella longbeachae.